Consider the following 375-residue polypeptide: 4-hydroxy-3-methylbut-2-en-1-yl diphosphate synthase (flavodoxin) (375 aa).

Cys-275, Cys-278, Cys-310, and Glu-317 together coordinate [4Fe-4S] cluster.

It belongs to the IspG family. Requires [4Fe-4S] cluster as cofactor.

The catalysed reaction is (2E)-4-hydroxy-3-methylbut-2-enyl diphosphate + oxidized [flavodoxin] + H2O + 2 H(+) = 2-C-methyl-D-erythritol 2,4-cyclic diphosphate + reduced [flavodoxin]. Its pathway is isoprenoid biosynthesis; isopentenyl diphosphate biosynthesis via DXP pathway; isopentenyl diphosphate from 1-deoxy-D-xylulose 5-phosphate: step 5/6. Functionally, converts 2C-methyl-D-erythritol 2,4-cyclodiphosphate (ME-2,4cPP) into 1-hydroxy-2-methyl-2-(E)-butenyl 4-diphosphate. In Ruegeria pomeroyi (strain ATCC 700808 / DSM 15171 / DSS-3) (Silicibacter pomeroyi), this protein is 4-hydroxy-3-methylbut-2-en-1-yl diphosphate synthase (flavodoxin).